The chain runs to 346 residues: Dimethylallyltranstransferase (346 aa).

The isopentenyl diphosphate site is built by lysine 96, arginine 99, and histidine 128. The Mg(2+) site is built by aspartate 135 and aspartate 141. Arginine 147 serves as a coordination point for isopentenyl diphosphate.

It belongs to the FPP/GGPP synthase family. Requires Mg(2+) as cofactor.

The enzyme catalyses isopentenyl diphosphate + dimethylallyl diphosphate = (2E)-geranyl diphosphate + diphosphate. It participates in isoprenoid biosynthesis; geranyl diphosphate biosynthesis; geranyl diphosphate from dimethylallyl diphosphate and isopentenyl diphosphate: step 1/1. Its function is as follows. Prenyltransferase involved in the biosynthesis of ambiguines, a family of hapalindole-type alkaloids. Catalyzes the addition of isopentenyl diphosphate (IPP) onto dimethylallyl diphosphate (DMAPP) to form geranyl pyrophosphate (GPP). Cannot use farnesyl diphosphate (FPP) or geranylgeranyl diphosphate (GGPP). The sequence is that of Dimethylallyltranstransferase from Fischerella ambigua (strain UTEX 1903).